The following is a 267-amino-acid chain: Proenkephalin-A (267 aa).

Positions 1–24 are cleaved as a signal peptide; sequence MARFLTLCTWLLLLGPGLLATVRA. 3 disulfide bridges follow: cysteine 26–cysteine 48, cysteine 30–cysteine 52, and cysteine 33–cysteine 65. The segment covering 163–175 has biased composition (basic and acidic residues); the sequence is TGDNRERSHHQDG. A disordered region spans residues 163-182; that stretch reads TGDNRERSHHQDGSDNEEEV. 2 propeptides span residues 196–207 and 217–227; these read SPQLEDEAKELQ and VGRPEWWMDYQ. Serine 251 carries the phosphoserine modification.

It belongs to the opioid neuropeptide precursor family. In terms of processing, proenkephalin-A is cleaved by CTSL to generate Met-enkephalin. Processed and degraded by ACE. Post-translationally, probably cleaved by ACE. In terms of processing, processed by ACE to generate Met-enkephalin in the nucleus accumbens of the brain. The N-terminal domain contains 6 conserved cysteines thought to be involved in disulfide bonding and/or processing.

The protein localises to the cytoplasmic vesicle. The protein resides in the secretory vesicle. It is found in the chromaffin granule lumen. Its subcellular location is the secreted. Functionally, neuropeptide that competes with and mimic the effects of opiate drugs. They play a role in a number of physiologic functions, including pain perception and responses to stress. Met-enkephalin-Arg-Phe neuropeptide acts as a strong ligand of Mu-type opioid receptor OPRM1. Met-enkephalin-Arg-Phe-binding to OPRM1 in the nucleus accumbens of the brain increases activation of OPRM1, leading to long-term synaptic depression of glutamate release. Its function is as follows. Increases glutamate release in the striatum and decreases GABA concentration in the striatum. In terms of biological role, increases glutamate release in the striatum. In Homo sapiens (Human), this protein is Proenkephalin-A.